The chain runs to 284 residues: Bifunctional protein FolD (284 aa).

Residues 166-168 (GAS) and Ile232 contribute to the NADP(+) site.

It belongs to the tetrahydrofolate dehydrogenase/cyclohydrolase family. As to quaternary structure, homodimer.

It carries out the reaction (6R)-5,10-methylene-5,6,7,8-tetrahydrofolate + NADP(+) = (6R)-5,10-methenyltetrahydrofolate + NADPH. The catalysed reaction is (6R)-5,10-methenyltetrahydrofolate + H2O = (6R)-10-formyltetrahydrofolate + H(+). It participates in one-carbon metabolism; tetrahydrofolate interconversion. Catalyzes the oxidation of 5,10-methylenetetrahydrofolate to 5,10-methenyltetrahydrofolate and then the hydrolysis of 5,10-methenyltetrahydrofolate to 10-formyltetrahydrofolate. In Shewanella sediminis (strain HAW-EB3), this protein is Bifunctional protein FolD.